Consider the following 363-residue polypeptide: Phosphoserine aminotransferase (363 aa).

Arginine 42 contributes to the L-glutamate binding site. Pyridoxal 5'-phosphate contacts are provided by residues 76–77 (GR), tryptophan 102, threonine 156, aspartate 175, and glutamine 198. The residue at position 199 (lysine 199) is an N6-(pyridoxal phosphate)lysine. Residue 240–241 (NT) participates in pyridoxal 5'-phosphate binding.

The protein belongs to the class-V pyridoxal-phosphate-dependent aminotransferase family. SerC subfamily. Homodimer. Requires pyridoxal 5'-phosphate as cofactor.

Its subcellular location is the cytoplasm. It carries out the reaction O-phospho-L-serine + 2-oxoglutarate = 3-phosphooxypyruvate + L-glutamate. It catalyses the reaction 4-(phosphooxy)-L-threonine + 2-oxoglutarate = (R)-3-hydroxy-2-oxo-4-phosphooxybutanoate + L-glutamate. It functions in the pathway amino-acid biosynthesis; L-serine biosynthesis; L-serine from 3-phospho-D-glycerate: step 2/3. Its pathway is cofactor biosynthesis; pyridoxine 5'-phosphate biosynthesis; pyridoxine 5'-phosphate from D-erythrose 4-phosphate: step 3/5. In terms of biological role, catalyzes the reversible conversion of 3-phosphohydroxypyruvate to phosphoserine and of 3-hydroxy-2-oxo-4-phosphonooxybutanoate to phosphohydroxythreonine. This Shewanella denitrificans (strain OS217 / ATCC BAA-1090 / DSM 15013) protein is Phosphoserine aminotransferase.